A 142-amino-acid chain; its full sequence is Small heat shock protein IbpB (142 aa).

Positions 26-137 constitute a sHSP domain; the sequence is AGEGQSFPPY…AAQRIAISER (112 aa).

Belongs to the small heat shock protein (HSP20) family. As to quaternary structure, homodimer. Forms homomultimers of about 100-150 subunits at optimal growth temperatures. Conformation changes to oligomers at high temperatures or high ionic concentrations. The decrease in size of the multimers is accompanied by an increase in chaperone activity.

The protein localises to the cytoplasm. In terms of biological role, associates with aggregated proteins, together with IbpA, to stabilize and protect them from irreversible denaturation and extensive proteolysis during heat shock and oxidative stress. Aggregated proteins bound to the IbpAB complex are more efficiently refolded and reactivated by the ATP-dependent chaperone systems ClpB and DnaK/DnaJ/GrpE. Its activity is ATP-independent. This Shigella boydii serotype 18 (strain CDC 3083-94 / BS512) protein is Small heat shock protein IbpB.